Consider the following 332-residue polypeptide: Putative D-threonate 4-phosphate dehydrogenase (332 aa).

2 residues coordinate substrate: His138 and Thr139. Residues His168, His211, and His266 each contribute to the a divalent metal cation site. 2 residues coordinate substrate: Lys274 and Arg292.

It belongs to the PdxA family. PdxA2 subfamily. As to quaternary structure, homodimer. Requires a divalent metal cation as cofactor.

The catalysed reaction is 4-O-phospho-D-threonate + NAD(+) = dihydroxyacetone phosphate + CO2 + NADH. Catalyzes the NAD-dependent oxidation and subsequent decarboxylation of D-threonate 4-phosphate to produce dihydroxyacetone phosphate (DHAP). The protein is Putative D-threonate 4-phosphate dehydrogenase of Fusobacterium nucleatum subsp. nucleatum (strain ATCC 25586 / DSM 15643 / BCRC 10681 / CIP 101130 / JCM 8532 / KCTC 2640 / LMG 13131 / VPI 4355).